Reading from the N-terminus, the 306-residue chain is tRNA dimethylallyltransferase (306 aa).

Residue 11–18 (GPTAVGKS) coordinates ATP. A substrate-binding site is contributed by 13-18 (TAVGKS). The interval 35–38 (DSIQ) is interaction with substrate tRNA.

Belongs to the IPP transferase family. Monomer. Mg(2+) is required as a cofactor.

It carries out the reaction adenosine(37) in tRNA + dimethylallyl diphosphate = N(6)-dimethylallyladenosine(37) in tRNA + diphosphate. In terms of biological role, catalyzes the transfer of a dimethylallyl group onto the adenine at position 37 in tRNAs that read codons beginning with uridine, leading to the formation of N6-(dimethylallyl)adenosine (i(6)A). The protein is tRNA dimethylallyltransferase of Borreliella burgdorferi (strain ATCC 35210 / DSM 4680 / CIP 102532 / B31) (Borrelia burgdorferi).